Here is a 465-residue protein sequence, read N- to C-terminus: Cysteine--tRNA ligase (465 aa).

C30 lines the Zn(2+) pocket. Residues 32–42 carry the 'HIGH' region motif; it reads ITVYDYCHVGH. C214, H239, and E243 together coordinate Zn(2+). Positions 271–275 match the 'KMSKS' region motif; sequence KMSKS. ATP is bound at residue K274.

This sequence belongs to the class-I aminoacyl-tRNA synthetase family. In terms of assembly, monomer. The cofactor is Zn(2+).

Its subcellular location is the cytoplasm. The enzyme catalyses tRNA(Cys) + L-cysteine + ATP = L-cysteinyl-tRNA(Cys) + AMP + diphosphate. In Burkholderia multivorans (strain ATCC 17616 / 249), this protein is Cysteine--tRNA ligase.